Reading from the N-terminus, the 24-residue chain is Lactadherin (24 aa).

It localises to the membrane. Its subcellular location is the secreted. It is found in the cytoplasmic vesicle. The protein localises to the secretory vesicle. The protein resides in the acrosome membrane. Specific ligand for the alpha-v/beta-3 and alpha-v/beta-5 receptors. Also binds to phosphatidylserine-enriched cell surfaces in a receptor-independent manner. Zona pellucida-binding protein which may play a role in gamete interaction. Contributes to phagocytic removal of apoptotic cells in many tissues. Plays an important role in the maintenance of intestinal epithelial homeostasis and the promotion of mucosal healing. Promotes VEGF-dependent neovascularization. The polypeptide is Lactadherin (Equus asinus (Donkey)).